Here is a 427-residue protein sequence, read N- to C-terminus: 3-phosphoshikimate 1-carboxyvinyltransferase (427 aa).

The 3-phosphoshikimate site is built by K20, S21, and R25. Position 20 (K20) interacts with phosphoenolpyruvate. Residues G92 and R120 each coordinate phosphoenolpyruvate. 4 residues coordinate 3-phosphoshikimate: S166, Q168, D312, and K339. Q168 provides a ligand contact to phosphoenolpyruvate. D312 serves as the catalytic Proton acceptor. Positions 343 and 385 each coordinate phosphoenolpyruvate.

Belongs to the EPSP synthase family. In terms of assembly, monomer.

Its subcellular location is the cytoplasm. The enzyme catalyses 3-phosphoshikimate + phosphoenolpyruvate = 5-O-(1-carboxyvinyl)-3-phosphoshikimate + phosphate. It functions in the pathway metabolic intermediate biosynthesis; chorismate biosynthesis; chorismate from D-erythrose 4-phosphate and phosphoenolpyruvate: step 6/7. Functionally, catalyzes the transfer of the enolpyruvyl moiety of phosphoenolpyruvate (PEP) to the 5-hydroxyl of shikimate-3-phosphate (S3P) to produce enolpyruvyl shikimate-3-phosphate and inorganic phosphate. This Streptococcus pyogenes serotype M28 (strain MGAS6180) protein is 3-phosphoshikimate 1-carboxyvinyltransferase.